The following is a 397-amino-acid chain: Lysophospholipid transporter LplT (397 aa).

Topologically, residues 1–17 (MSESVHTNTSLWSKGMK) are periplasmic. Residues 18 to 38 (AVIVAQFLSAFGDNALLFATL) traverse the membrane as a helical segment. At 39-52 (ALLKAQFYPEWSQP) the chain is on the cytoplasmic side. Residues 53–73 (ILQMVFVGAYILFAPFVGQVA) traverse the membrane as a helical segment. At 74–90 (DSFAKGRVMMFANGLKL) the chain is on the periplasmic side. Residues 91–111 (LGAASICFGINPFLGYTLVGV) form a helical membrane-spanning segment. Topologically, residues 112 to 144 (GAAAYSPAKYGILGELTTGSKLVKANGLMEAST) are cytoplasmic. Residues 145-165 (IAAILLGSVAGGVLADWHVLV) traverse the membrane as a helical segment. Residue Ala-166 is a topological domain, periplasmic. The chain crosses the membrane as a helical span at residues 167–187 (LAACALAYGGAVVANIYIPKL). The Cytoplasmic segment spans residues 188–226 (AAARPGQSWNLINMTRSFLNACTSLWRNGETRFSLVGTS). Residues 227 to 247 (LFWGAGVTLRFLLVLWVPVAL) form a helical membrane-spanning segment. At 248 to 256 (GITDNATPT) the chain is on the periplasmic side. A helical membrane pass occupies residues 257-277 (YLNAMVAIGIVVGAGAAAKLV). Over 278–280 (TLE) the chain is Cytoplasmic. The helical transmembrane segment at 281-301 (TVSRCMPAGILIGVVVLIFSL) threads the bilayer. The Periplasmic portion of the chain corresponds to 302–304 (QHE). Residues 305-325 (LLPAYALLMLIGVLGGFFVVP) traverse the membrane as a helical segment. Topologically, residues 326–343 (LNALLQERGKKSVGAGNA) are cytoplasmic. The helical transmembrane segment at 344–364 (IAVQNLGENSAMLLMLGIYSL) threads the bilayer. At 365–366 (AV) the chain is on the periplasmic side. A helical membrane pass occupies residues 367–387 (MVGIPVVPIGIGFGTLFALAI). The Cytoplasmic segment spans residues 388–397 (TALWIWQRRH).

It belongs to the major facilitator superfamily. LplT (TC 2.A.1.42) family.

It is found in the cell inner membrane. Its function is as follows. Catalyzes the facilitated diffusion of 2-acyl-glycero-3-phosphoethanolamine (2-acyl-GPE) into the cell. This chain is Lysophospholipid transporter LplT, found in Escherichia coli O9:H4 (strain HS).